The primary structure comprises 307 residues: N-acetylglucosamine-1-phosphotransferase subunit gamma (307 aa).

The first 24 residues, 1–24, serve as a signal peptide directing secretion; it reads MAGRLAGFLMLLGLASQGPAPAYA. In terms of domain architecture, MRH spans 69-171; sequence GKCFSLVEST…TFETPLVCHP (103 aa). A disulfide bond links Cys71 and Cys84. Asn88 and Asn115 each carry an N-linked (GlcNAc...) asparagine glycan. Disulfide bonds link Cys129-Cys157 and Cys142-Cys169. The DMAP1-binding domain maps to 176 to 279; sequence VYPTLSEALQ…HTQPTETTHS (104 aa).

In terms of assembly, homodimer; disulfide-linked. Hexamer of two alpha (GNPTAB), two beta (GNPTAB) and two gamma (GNPTG) subunits; disulfide-linked. The alpha and/or the beta subunits of the enzyme constitute the catalytic subunits. Post-translationally, cys-245 mediates the formation of the interchain disulfide bond for formation of the homodimer. Cys-142, Cys-157 and Cys-169 are involved in intramolecular disulfide bonds formation. As to expression, widely expressed. Highly expressed in the liver, intestine, brain, thymus, testis and ovary.

Its subcellular location is the secreted. The protein localises to the golgi apparatus. Non-catalytic subunit of the N-acetylglucosamine-1-phosphotransferase complex, an enzyme that catalyzes the formation of mannose 6-phosphate (M6P) markers on high mannose type oligosaccharides in the Golgi apparatus. Binds and presents the high mannose glycans of the acceptor to the catalytic alpha and beta subunits (GNPTAB). Enhances the rate of N-acetylglucosamine-1-phosphate transfer to the oligosaccharides of acid hydrolase acceptors. The chain is N-acetylglucosamine-1-phosphotransferase subunit gamma (Gnptg) from Mus musculus (Mouse).